A 463-amino-acid polypeptide reads, in one-letter code: Cysteine--tRNA ligase (463 aa).

Cysteine 33 provides a ligand contact to Zn(2+). A 'HIGH' region motif is present at residues 35–45 (PTVYDFAHIGN). Residues cysteine 221, histidine 246, and glutamate 250 each coordinate Zn(2+). The short motif at 279 to 283 (KMSKS) is the 'KMSKS' region element. ATP is bound at residue lysine 282.

This sequence belongs to the class-I aminoacyl-tRNA synthetase family. In terms of assembly, monomer. Zn(2+) is required as a cofactor.

The protein resides in the cytoplasm. It catalyses the reaction tRNA(Cys) + L-cysteine + ATP = L-cysteinyl-tRNA(Cys) + AMP + diphosphate. In Rhizobium leguminosarum bv. trifolii (strain WSM2304), this protein is Cysteine--tRNA ligase.